The primary structure comprises 125 residues: Fluoride-specific ion channel FluC (125 aa).

Transmembrane regions (helical) follow at residues 1 to 21 (MIQAILVAFGGAIGSVLRYYV), 32 to 52 (AFPWGTLAVNVVGCFVIGVFA), 68 to 88 (LLITGFLGGFTTFSAFSLDAI), and 101 to 121 (IYIAASVGLSMAAVIAGLAVM). The Na(+) site is built by glycine 75 and threonine 78.

Belongs to the fluoride channel Fluc/FEX (TC 1.A.43) family.

The protein localises to the cell inner membrane. It catalyses the reaction fluoride(in) = fluoride(out). Na(+) is not transported, but it plays an essential structural role and its presence is essential for fluoride channel function. Its function is as follows. Fluoride-specific ion channel. Important for reducing fluoride concentration in the cell, thus reducing its toxicity. This chain is Fluoride-specific ion channel FluC, found in Rhizobium johnstonii (strain DSM 114642 / LMG 32736 / 3841) (Rhizobium leguminosarum bv. viciae).